A 192-amino-acid polypeptide reads, in one-letter code: Thymidine kinase (192 aa).

ATP is bound by residues 9–16 (SSMNAGKS) and 87–90 (DEAQ). The Proton acceptor role is filled by Glu-88. Zn(2+)-binding residues include Cys-145, Cys-147, Cys-182, and His-185.

Belongs to the thymidine kinase family. As to quaternary structure, homotetramer.

The protein localises to the cytoplasm. The catalysed reaction is thymidine + ATP = dTMP + ADP + H(+). The polypeptide is Thymidine kinase (Colwellia psychrerythraea (strain 34H / ATCC BAA-681) (Vibrio psychroerythus)).